The primary structure comprises 479 residues: Ribosomal RNA small subunit methyltransferase F (479 aa).

S-adenosyl-L-methionine contacts are provided by residues 125-131, Glu-149, Gly-177, and Asp-194; that span reads AAAPGSK. The active-site Nucleophile is Cys-247.

It belongs to the class I-like SAM-binding methyltransferase superfamily. RsmB/NOP family.

Its subcellular location is the cytoplasm. It carries out the reaction cytidine(1407) in 16S rRNA + S-adenosyl-L-methionine = 5-methylcytidine(1407) in 16S rRNA + S-adenosyl-L-homocysteine + H(+). Specifically methylates the cytosine at position 1407 (m5C1407) of 16S rRNA. The polypeptide is Ribosomal RNA small subunit methyltransferase F (Shigella flexneri serotype 5b (strain 8401)).